We begin with the raw amino-acid sequence, 266 residues long: GTP cyclohydrolase III (266 aa).

This sequence belongs to the archaeal-type GTP cyclohydrolase family.

The enzyme catalyses GTP + 3 H2O = 2-amino-5-formylamino-6-(5-phospho-D-ribosylamino)pyrimidin-4(3H)-one + 2 phosphate + 2 H(+). Its function is as follows. Catalyzes the formation of 2-amino-5-formylamino-6-ribofuranosylamino-4(3H)-pyrimidinone ribonucleotide monophosphate and inorganic phosphate from GTP. Also has an independent pyrophosphate phosphohydrolase activity. This chain is GTP cyclohydrolase III, found in Methanococcus vannielii (strain ATCC 35089 / DSM 1224 / JCM 13029 / OCM 148 / SB).